The chain runs to 198 residues: Transcriptional regulator GfcR (198 aa).

The protein belongs to the purine/pyrimidine phosphoribosyltransferase family. GfcR subfamily.

The protein is Transcriptional regulator GfcR of Methanosphaera stadtmanae (strain ATCC 43021 / DSM 3091 / JCM 11832 / MCB-3).